Consider the following 279-residue polypeptide: Putative potassium channel regulatory protein (279 aa).

Residues 5–74 (ELVTLNVGGM…VRTSQLSLPS (70 aa)) form the BTB domain. The tract at residues 256-279 (ENSRQENYETETVQVKQAKPNKKR) is disordered.

The protein resides in the endoplasmic reticulum. Its function is as follows. Inhibits potassium fluxes in cells, possibly by retaining potassium channels in the cytoplasm. The polypeptide is Putative potassium channel regulatory protein (kcnrg) (Xenopus tropicalis (Western clawed frog)).